The following is a 495-amino-acid chain: Glycerol kinase (495 aa).

Threonine 11 contributes to the ADP binding site. ATP-binding residues include threonine 11, threonine 12, and serine 13. Threonine 11 provides a ligand contact to sn-glycerol 3-phosphate. Sn-glycerol 3-phosphate contacts are provided by arginine 81, glutamate 82, tyrosine 133, and aspartate 242. Positions 81, 82, 133, 242, and 243 each coordinate glycerol. Residues threonine 264, glycine 307, glycine 407, and asparagine 411 each coordinate ADP. Residues threonine 264, glycine 307, and glycine 407 each coordinate ATP.

It belongs to the FGGY kinase family.

It catalyses the reaction glycerol + ATP = sn-glycerol 3-phosphate + ADP + H(+). It participates in polyol metabolism; glycerol degradation via glycerol kinase pathway; sn-glycerol 3-phosphate from glycerol: step 1/1. Inhibited by fructose 1,6-bisphosphate (FBP). Its function is as follows. Key enzyme in the regulation of glycerol uptake and metabolism. Catalyzes the phosphorylation of glycerol to yield sn-glycerol 3-phosphate. In Thermus brockianus, this protein is Glycerol kinase.